The primary structure comprises 190 residues: ADP-ribosylation factor-like protein 6 (190 aa).

Residue G2 is the site of N-myristoyl glycine attachment. GTP-binding positions include 24–31, T50, 69–73, G72, 130–133, and A164; these read GLDNSGKT, DMAGQ, and NKMD. Mg(2+) is bound by residues T31 and T50.

It belongs to the small GTPase superfamily. Arf family.

The protein localises to the cytoplasm. The polypeptide is ADP-ribosylation factor-like protein 6 (Caenorhabditis briggsae).